The following is a 207-amino-acid chain: MKIIHKGLVEYLPTFEAMKTFNAGRNADTEDELWVVEHPPVFTQGLVGKPEHLLIRDDIPVVQIDRGGQITYHGPGQLVVYTMIDFKRRKTSVRNIVSALENSIIATLAEYGIEAAADPKRPGVYVGERKIASLGLRIKNGSVYHGLALNVNMDLSPFTHINPCGYAGMEMTQIADFVQPCPTPDEVAAKLTAHLETQFTPKADNNE.

The BPL/LPL catalytic domain occupies 27–203; it reads ADTEDELWVV…HLETQFTPKA (177 aa). Substrate is bound by residues 66–73, 133–135, and 146–148; these read RGGQITYH, SLG, and GLA. Catalysis depends on cysteine 164, which acts as the Acyl-thioester intermediate.

The protein belongs to the LipB family.

Its subcellular location is the cytoplasm. The catalysed reaction is octanoyl-[ACP] + L-lysyl-[protein] = N(6)-octanoyl-L-lysyl-[protein] + holo-[ACP] + H(+). The protein operates within protein modification; protein lipoylation via endogenous pathway; protein N(6)-(lipoyl)lysine from octanoyl-[acyl-carrier-protein]: step 1/2. Catalyzes the transfer of endogenously produced octanoic acid from octanoyl-acyl-carrier-protein onto the lipoyl domains of lipoate-dependent enzymes. Lipoyl-ACP can also act as a substrate although octanoyl-ACP is likely to be the physiological substrate. This Neisseria meningitidis serogroup A / serotype 4A (strain DSM 15465 / Z2491) protein is Octanoyltransferase.